We begin with the raw amino-acid sequence, 302 residues long: D-alanine--D-alanine ligase (302 aa).

Positions 99 to 298 (KRLFVAEGIP…FEQLIQRIID (200 aa)) constitute an ATP-grasp domain. Position 128–183 (128–183 (LAALGSPVVVKPADGGSTVGVTIAREAGHLPEAVRLALQYSPQVLIEQYIPGQEIT)) interacts with ATP. Residues Asp252, Glu265, and Asn267 each contribute to the Mg(2+) site.

It belongs to the D-alanine--D-alanine ligase family. Requires Mg(2+) as cofactor. Mn(2+) is required as a cofactor.

It localises to the cytoplasm. It carries out the reaction 2 D-alanine + ATP = D-alanyl-D-alanine + ADP + phosphate + H(+). It functions in the pathway cell wall biogenesis; peptidoglycan biosynthesis. Functionally, cell wall formation. The chain is D-alanine--D-alanine ligase from Gloeobacter violaceus (strain ATCC 29082 / PCC 7421).